The chain runs to 142 residues: Hemoglobin subunit alpha-4 (142 aa).

The 141-residue stretch at 2 to 142 (VLSAADKSNV…VSTVLTSKYR (141 aa)) folds into the Globin domain. O2 is bound at residue H59. H88 provides a ligand contact to heme b.

The protein belongs to the globin family. In terms of assembly, heterotetramer of two alpha chains and two beta chains. As to expression, red blood cells.

In terms of biological role, involved in oxygen transport from the lung to the various peripheral tissues. In Bubalus bubalis (Domestic water buffalo), this protein is Hemoglobin subunit alpha-4.